The primary structure comprises 416 residues: Gamma-glutamyl phosphate reductase (416 aa).

Belongs to the gamma-glutamyl phosphate reductase family.

It localises to the cytoplasm. The enzyme catalyses L-glutamate 5-semialdehyde + phosphate + NADP(+) = L-glutamyl 5-phosphate + NADPH + H(+). Its pathway is amino-acid biosynthesis; L-proline biosynthesis; L-glutamate 5-semialdehyde from L-glutamate: step 2/2. In terms of biological role, catalyzes the NADPH-dependent reduction of L-glutamate 5-phosphate into L-glutamate 5-semialdehyde and phosphate. The product spontaneously undergoes cyclization to form 1-pyrroline-5-carboxylate. The sequence is that of Gamma-glutamyl phosphate reductase from Salmonella arizonae (strain ATCC BAA-731 / CDC346-86 / RSK2980).